The primary structure comprises 158 residues: Putative pre-16S rRNA nuclease (158 aa).

The segment at 138–158 is disordered; it reads ELKPAQQTASRSGAGAGDGGS.

Belongs to the YqgF nuclease family.

The protein resides in the cytoplasm. In terms of biological role, could be a nuclease involved in processing of the 5'-end of pre-16S rRNA. This Synechococcus sp. (strain CC9605) protein is Putative pre-16S rRNA nuclease.